Reading from the N-terminus, the 111-residue chain is Integration host factor subunit alpha (111 aa).

Belongs to the bacterial histone-like protein family. As to quaternary structure, heterodimer of an alpha and a beta chain.

In terms of biological role, this protein is one of the two subunits of integration host factor, a specific DNA-binding protein that functions in genetic recombination as well as in transcriptional and translational control. The sequence is that of Integration host factor subunit alpha from Chelativorans sp. (strain BNC1).